Consider the following 1373-residue polypeptide: Actin cytoskeleton-regulatory complex protein PAN1 (1373 aa).

Positions 116 to 205 (DQKKFEHLFR…EKWANEVKSF (90 aa)) constitute an EH 1 domain. The 36-residue stretch at 149–184 (LTPVTLAEIWSLSDTNKSGSLLFPEFALSLHLCSMA) folds into the EF-hand 1 domain. Disordered regions lie at residues 271 to 362 (GGGL…QQQS) and 385 to 409 (AQRT…QPTG). Composition is skewed to low complexity over residues 290–309 (TTSF…PLAS) and 341–362 (PQQL…QQQS). Residues 389–408 (GPLQSQSTGFQPAPLQSQPT) show a composition bias toward polar residues. One can recognise an EH 2 domain in the interval 465-554 (EKSIYDGIFQ…PELIPPSNKY (90 aa)). The EF-hand 2 domain maps to 498 to 533 (LSRPDLESIWTLADTSDRGKLNKDEFSVAMHLVYRR). Disordered regions lie at residues 562–622 (MKNS…SSSD), 739–758 (SWNP…NGEV), 876–914 (QNSS…RTPE), 931–1089 (RLAK…TAED), 1103–1335 (EAVP…APPV), and 1349–1373 (GKSL…TVLS). Residues 571-580 (NNKSYSGGKQ) show a composition bias toward polar residues. Residues 581–590 (TKSDGTRFKN) show a composition bias toward basic and acidic residues. Residues 739–752 (SWNPDSNESEIQGT) are compositionally biased toward polar residues. 2 stretches are compositionally biased toward low complexity: residues 878 to 909 (SSSL…ASSS) and 965 to 977 (PAVV…SPPV). Residues 1007–1066 (DDEEYAAILKQKQQLEAKEKERKLAKQKQKQARLDKIKKEMEEIKRRQAEAEAEEDSDEE) adopt a coiled-coil conformation. Composition is skewed to basic and acidic residues over residues 1019 to 1030 (QQLEAKEKERKL) and 1038 to 1056 (ARLD…RQAE). The segment covering 1057-1067 (AEAEEDSDEEP) has biased composition (acidic residues). Polar residues-rich tracts occupy residues 1070–1079 (VPTYTVSNSA) and 1118–1134 (NPFS…STNP). Positions 1139-1149 (TTKESTIDPKK) are enriched in basic and acidic residues. The span at 1154–1166 (RASQRGLSKNDGW) shows a compositional bias: polar residues. The segment covering 1167 to 1177 (SDSDDNESEDD) has biased composition (acidic residues). The segment covering 1250 to 1326 (PPIPTEVPPI…PPPPGPPPPV (77 aa)) has biased composition (pro residues). The WH2 domain maps to 1338–1355 (DIGALLGQIQGGKSLKKV). Polar residues predominate over residues 1357-1373 (ASQQKISSNDLAGTVLS).

Belongs to the PAN1 family. Component of the PAN1 actin cytoskeleton-regulatory complex.

It localises to the cell membrane. The protein resides in the endosome membrane. It is found in the cytoplasm. The protein localises to the cytoskeleton. Its subcellular location is the actin patch. In terms of biological role, component of the PAN1 actin cytoskeleton-regulatory complex required for the internalization of endosomes during actin-coupled endocytosis. The complex links the site of endocytosis to the cell membrane-associated actin cytoskeleton. Mediates uptake of external molecules and vacuolar degradation of plasma membrane proteins. Plays a role in the proper organization of the cell membrane-associated actin cytoskeleton and promotes its destabilization. This chain is Actin cytoskeleton-regulatory complex protein PAN1 (PAN1), found in Scheffersomyces stipitis (strain ATCC 58785 / CBS 6054 / NBRC 10063 / NRRL Y-11545) (Yeast).